The primary structure comprises 451 residues: Chromosomal replication initiator protein DnaA (451 aa).

The domain I, interacts with DnaA modulators stretch occupies residues 1–82; it reads MENSLWKQCL…RLELQIGSSA (82 aa). The domain II stretch occupies residues 82–114; sequence AVVAPPRRRQVSVTTPSPSAAADQTPATRSAAS. Residues 85–112 are disordered; it reads APPRRRQVSVTTPSPSAAADQTPATRSA. Residues 115–331 are domain III, AAA+ region; sequence NLNSNFTFDT…GALRRVVANA (217 aa). ATP is bound by residues glycine 159, glycine 161, lysine 162, and threonine 163. The tract at residues 332–451 is domain IV, binds dsDNA; sequence QFTGQEITVE…YSNLLRTLST (120 aa).

It belongs to the DnaA family. Oligomerizes as a right-handed, spiral filament on DNA at oriC.

The protein resides in the cytoplasm. Plays an essential role in the initiation and regulation of chromosomal replication. ATP-DnaA binds to the origin of replication (oriC) to initiate formation of the DNA replication initiation complex once per cell cycle. Binds the DnaA box (a 9 base pair repeat at the origin) and separates the double-stranded (ds)DNA. Forms a right-handed helical filament on oriC DNA; dsDNA binds to the exterior of the filament while single-stranded (ss)DNA is stabiized in the filament's interior. The ATP-DnaA-oriC complex binds and stabilizes one strand of the AT-rich DNA unwinding element (DUE), permitting loading of DNA polymerase. After initiation quickly degrades to an ADP-DnaA complex that is not apt for DNA replication. Binds acidic phospholipids. The polypeptide is Chromosomal replication initiator protein DnaA (Alkalilimnicola ehrlichii (strain ATCC BAA-1101 / DSM 17681 / MLHE-1)).